A 380-amino-acid chain; its full sequence is Cell division protein FtsZ 2 (380 aa).

Residues 47 to 51 (GAGNN), 134 to 136 (GTG), Glu-165, Arg-168, and Asp-211 each bind GTP.

This sequence belongs to the FtsZ family. Homodimer. Polymerizes to form a dynamic ring structure in a strictly GTP-dependent manner. Interacts directly with several other division proteins.

Its subcellular location is the cytoplasm. In terms of biological role, essential cell division protein that forms a contractile ring structure (Z ring) at the future cell division site. The regulation of the ring assembly controls the timing and the location of cell division. One of the functions of the FtsZ ring is to recruit other cell division proteins to the septum to produce a new cell wall between the dividing cells. Binds GTP and shows GTPase activity. In Methanocaldococcus jannaschii (strain ATCC 43067 / DSM 2661 / JAL-1 / JCM 10045 / NBRC 100440) (Methanococcus jannaschii), this protein is Cell division protein FtsZ 2.